Here is a 161-residue protein sequence, read N- to C-terminus: Long arms of the bivalent protein 1 (161 aa).

The PP1 binding motif signature appears at 72–75 (KVIW). Positions 85 to 161 (GTMFEDFKED…SDKTMCSGQS (77 aa)) are disordered. Positions 97-115 (QESVSSISNNEANWGSSVN) are enriched in polar residues. Basic and acidic residues predominate over residues 120–129 (NYEKMQKEET). Positions 130-151 (FDPYDSDSDTSEDSDFDEDFED) are enriched in acidic residues.

In terms of assembly, interacts with gsp-1 and gsp-2; the interaction is direct.

The protein resides in the chromosome. Its subcellular location is the nucleus. In terms of biological role, involved in sister chromatid cohesion during mitosis and meiosis. In association with the gsp-2 phosphatase, it both restricts the localization and antagonizes the function of the air-2 kinase during meiosis I and mitosis to promote chromatid cohesion and spindle attachment. This in turn, drives germ cell immortality. Furthermore, may play a role in ensuring the timely assembly of the synaptonemal complex during prophase I of meiosis. This chain is Long arms of the bivalent protein 1, found in Caenorhabditis elegans.